The chain runs to 131 residues: Transcriptional activatory protein CaiF (131 aa).

Potential transcriptional activator of carnitine metabolism. This chain is Transcriptional activatory protein CaiF (caiF), found in Escherichia coli (strain K12).